Here is a 427-residue protein sequence, read N- to C-terminus: Glutamate-1-semialdehyde 2,1-aminomutase (427 aa).

Residue Lys265 is modified to N6-(pyridoxal phosphate)lysine.

This sequence belongs to the class-III pyridoxal-phosphate-dependent aminotransferase family. HemL subfamily. Homodimer. The cofactor is pyridoxal 5'-phosphate.

The protein resides in the cytoplasm. The catalysed reaction is (S)-4-amino-5-oxopentanoate = 5-aminolevulinate. Its pathway is porphyrin-containing compound metabolism; protoporphyrin-IX biosynthesis; 5-aminolevulinate from L-glutamyl-tRNA(Glu): step 2/2. The chain is Glutamate-1-semialdehyde 2,1-aminomutase from Pseudomonas paraeruginosa (strain DSM 24068 / PA7) (Pseudomonas aeruginosa (strain PA7)).